The sequence spans 226 residues: 2-dehydro-3-deoxy-phosphogluconate aldolase (226 aa).

The active-site Proton acceptor is the E57. Positions 61, 85, and 145 each coordinate pyruvate. The active-site Schiff-base intermediate with substrate is the K145.

Belongs to the KHG/KDPG aldolase family. In terms of assembly, homotrimer.

It carries out the reaction 2-dehydro-3-deoxy-6-phospho-D-gluconate = D-glyceraldehyde 3-phosphate + pyruvate. It functions in the pathway carbohydrate acid metabolism; 2-dehydro-3-deoxy-D-gluconate degradation; D-glyceraldehyde 3-phosphate and pyruvate from 2-dehydro-3-deoxy-D-gluconate: step 2/2. Involved in the degradation of glucose via the Entner-Doudoroff pathway. Catalyzes the reversible, stereospecific retro-aldol cleavage of 2-keto-3-deoxy-6-phosphogluconate (KDPG) to pyruvate and D-glyceraldehyde-3-phosphate. The chain is 2-dehydro-3-deoxy-phosphogluconate aldolase from Pseudomonas putida (Arthrobacter siderocapsulatus).